The primary structure comprises 1240 residues: DNA-directed RNA polymerase subunit beta (1240 aa).

The protein belongs to the RNA polymerase beta chain family. In terms of assembly, the RNAP catalytic core consists of 2 alpha, 1 beta, 1 beta' and 1 omega subunit. When a sigma factor is associated with the core the holoenzyme is formed, which can initiate transcription.

It catalyses the reaction RNA(n) + a ribonucleoside 5'-triphosphate = RNA(n+1) + diphosphate. DNA-dependent RNA polymerase catalyzes the transcription of DNA into RNA using the four ribonucleoside triphosphates as substrates. The chain is DNA-directed RNA polymerase subunit beta from Rhodopirellula baltica (strain DSM 10527 / NCIMB 13988 / SH1).